We begin with the raw amino-acid sequence, 492 residues long: Sestrin-1 (492 aa).

The N-terminal domain; may mediate the alkylhydroperoxide reductase activity stretch occupies residues 71–252 (FADSFAALGR…ICDITNGNHS (182 aa)). Residue Cys-130 is the Cysteine sulfenic acid (-SOH) intermediate of the active site. 2 positions are modified to phosphoserine: Ser-293 and Ser-314. The C-terminal domain; mediates TORC1 regulation stretch occupies residues 321-492 (PARDVSRHFE…ALRAITRYMT (172 aa)). L-leucine contacts are provided by residues 386–389 (TYNT), Thr-398, and Glu-463.

It belongs to the sestrin family. As to quaternary structure, interacts with the GATOR2 complex which is composed of MIOS, SEC13, SEH1L, WDR24 and WDR59; the interaction is negatively regulated by leucine. Interacts with RRAGA, RRAGB, RRAGC and RRAGD; may function as a guanine nucleotide dissociation inhibitor for RRAGs and regulate them. Interacts with KEAP1, RBX1 and SQSTM1; in the SQSTM1-dependent autophagic degradation of KEAP1. May interact with PRDX1. Highly expressed in heart and also detected in liver and skeletal muscles (at protein level).

The protein resides in the nucleus. It localises to the cytoplasm. The enzyme catalyses a hydroperoxide + L-cysteinyl-[protein] = S-hydroxy-L-cysteinyl-[protein] + an alcohol. Functionally, functions as an intracellular leucine sensor that negatively regulates the TORC1 signaling pathway through the GATOR complex. In absence of leucine, binds the GATOR subcomplex GATOR2 and prevents TORC1 signaling. Binding of leucine to SESN2 disrupts its interaction with GATOR2 thereby activating the TORC1 signaling pathway. This stress-inducible metabolic regulator may also play a role in protection against oxidative and genotoxic stresses. May positively regulate the transcription by NFE2L2 of genes involved in the response to oxidative stress by facilitating the SQSTM1-mediated autophagic degradation of KEAP1. Moreover, may prevent the accumulation of reactive oxygen species (ROS) through the alkylhydroperoxide reductase activity born by the N-terminal domain of the protein. Was originally reported to contribute to oxidative stress resistance by reducing PRDX1. However, this could not be confirmed. This is Sestrin-1 from Mus musculus (Mouse).